The following is a 165-amino-acid chain: Alanine- and arginine-rich domain-containing protein (165 aa).

The segment at 136-165 (QQLKKRQDQERASKPQSPQDEEMNPECGNA) is disordered.

This Rattus norvegicus (Rat) protein is Alanine- and arginine-rich domain-containing protein (Aard).